Here is a 135-residue protein sequence, read N- to C-terminus: Large ribosomal subunit protein uL16c (135 aa).

The protein belongs to the universal ribosomal protein uL16 family. In terms of assembly, part of the 50S ribosomal subunit.

The protein resides in the plastid. It is found in the chloroplast. In Panax ginseng (Korean ginseng), this protein is Large ribosomal subunit protein uL16c.